A 386-amino-acid chain; its full sequence is Probable mannan endo-1,4-beta-mannosidase A (386 aa).

The signal sequence occupies residues 1-21 (MKLNPSLLTAAGLVSAQLASA). Trp-95 and Asn-207 together coordinate substrate. Glu-208 acts as the Proton donor in catalysis. Tyr-283 provides a ligand contact to substrate. Residue Glu-316 is the Nucleophile of the active site. N-linked (GlcNAc...) asparagine glycosylation occurs at Asn-336. Residue Trp-346 participates in substrate binding.

Belongs to the glycosyl hydrolase 5 (cellulase A) family.

The protein resides in the secreted. The enzyme catalyses Random hydrolysis of (1-&gt;4)-beta-D-mannosidic linkages in mannans, galactomannans and glucomannans.. Endo-1,4-mannanase, a crucial enzyme for depolymerization of seed galactomannans and wood galactoglucomannans. The chain is Probable mannan endo-1,4-beta-mannosidase A (manA) from Aspergillus flavus (strain ATCC 200026 / FGSC A1120 / IAM 13836 / NRRL 3357 / JCM 12722 / SRRC 167).